A 984-amino-acid polypeptide reads, in one-letter code: Probable translation initiation factor IF-2 (984 aa).

The DOD-type homing endonuclease domain maps to 94–215 (VNGWYSVTVT…LPLLLLRFGI (122 aa)). The region spanning 391 to 608 (TTETHNFVAN…LIAGLSQKYL (218 aa)) is the tr-type G domain. Residues 464–468 (DTPGH) and 518–521 (NKID) each bind GTP.

Belongs to the TRAFAC class translation factor GTPase superfamily. Classic translation factor GTPase family. IF-2 subfamily. In terms of processing, this protein undergoes a protein self splicing that involves a post-translational excision of the intervening region (intein) followed by peptide ligation.

In terms of biological role, function in general translation initiation by promoting the binding of the formylmethionine-tRNA to ribosomes. Seems to function along with eIF-2. This is Probable translation initiation factor IF-2 (infB) from Pyrococcus furiosus (strain ATCC 43587 / DSM 3638 / JCM 8422 / Vc1).